Consider the following 372-residue polypeptide: DNA primase small subunit PriS (372 aa).

Residues Asp-95, Asp-97, and Asp-280 contribute to the active site.

The protein belongs to the eukaryotic-type primase small subunit family. Heterodimer of a small subunit (PriS) and a large subunit (PriL). Requires Mg(2+) as cofactor. The cofactor is Mn(2+).

Catalytic subunit of DNA primase, an RNA polymerase that catalyzes the synthesis of short RNA molecules used as primers for DNA polymerase during DNA replication. The small subunit contains the primase catalytic core and has DNA synthesis activity on its own. Binding to the large subunit stabilizes and modulates the activity, increasing the rate of DNA synthesis while decreasing the length of the DNA fragments, and conferring RNA synthesis capability. The DNA polymerase activity may enable DNA primase to also catalyze primer extension after primer synthesis. May also play a role in DNA repair. The chain is DNA primase small subunit PriS from Cenarchaeum symbiosum (strain A).